The primary structure comprises 271 residues: Neurexophilin-1 (271 aa).

A signal peptide spans 1 to 21; sequence MQAACWYVLLLLQPTIYLVTC. Residues 22-97 form an II region; the sequence is ANLTNGGKSE…WDWLRNSTDL (76 aa). N-linked (GlcNAc...) asparagine glycosylation is found at N23, N68, N93, N146, N156, and N162. The interval 98–176 is III; the sequence is QEPRPRAKRR…LVPPTKIVEF (79 aa). The segment at 177–185 is IV (linker domain); sequence DLAQQTVID. Residues 186 to 271 form a v (Cys-rich) region; the sequence is AKDSKSFNCR…HSDTPYFPSG (86 aa).

Belongs to the neurexophilin family.

The protein localises to the secreted. In terms of biological role, may be signaling molecules that resemble neuropeptides and that act by binding to alpha-neurexins and possibly other receptors. This Pongo abelii (Sumatran orangutan) protein is Neurexophilin-1 (NXPH1).